The chain runs to 364 residues: GTPase Obg (364 aa).

In terms of domain architecture, Obg spans 1–159 (MKFVDEAYID…KSLKLELKVL (159 aa)). In terms of domain architecture, OBG-type G spans 160-334 (ADVGLLGMPN…LVKTIYQHVK (175 aa)). GTP is bound by residues 166 to 173 (GMPNAGKS), 191 to 195 (FTTLH), 213 to 216 (DLPG), 284 to 287 (NKLD), and 315 to 317 (SAL). Mg(2+) contacts are provided by serine 173 and threonine 193. A disordered region spans residues 337 to 364 (QKSEQPEEEVDPRFIELPPEPAKPASSD).

It belongs to the TRAFAC class OBG-HflX-like GTPase superfamily. OBG GTPase family. In terms of assembly, monomer. It depends on Mg(2+) as a cofactor.

It is found in the cytoplasm. An essential GTPase which binds GTP, GDP and possibly (p)ppGpp with moderate affinity, with high nucleotide exchange rates and a fairly low GTP hydrolysis rate. Plays a role in control of the cell cycle, stress response, ribosome biogenesis and in those bacteria that undergo differentiation, in morphogenesis control. The chain is GTPase Obg from Polaromonas naphthalenivorans (strain CJ2).